Here is a 129-residue protein sequence, read N- to C-terminus: Fluoride-specific ion channel FluC 2 (129 aa).

The next 4 helical transmembrane spans lie at 3–23 (FLYV…MNLW), 32–52 (ATLA…RFLA), 59–79 (LVLL…FSAF), and 90–110 (GAWL…LIMV). Positions 71 and 74 each coordinate Na(+).

The protein belongs to the fluoride channel Fluc/FEX (TC 1.A.43) family.

The protein resides in the cell membrane. It carries out the reaction fluoride(in) = fluoride(out). With respect to regulation, na(+) is not transported, but it plays an essential structural role and its presence is essential for fluoride channel function. Its function is as follows. Fluoride-specific ion channel. Important for reducing fluoride concentration in the cell, thus reducing its toxicity. This Listeria monocytogenes serovar 1/2a (strain ATCC BAA-679 / EGD-e) protein is Fluoride-specific ion channel FluC 2.